Consider the following 587-residue polypeptide: Probable intramembrane protease YKL100C (587 aa).

At 1–85 (MDKYLNSFVD…HSLVFNYATL (85 aa)) the chain is on the lumenal side. The chain crosses the membrane as a helical span at residues 86 to 106 (VLIASALVVIGSFTSISSIPF). At 107–156 (TALPPTREHSLFDPTDFDVDHDCHVIYRENDEDKKKKKKSKRFFDMMDEK) the chain is on the cytoplasmic side. A helical transmembrane segment spans residues 157–177 (HAIILPLTSGCTLLALYFVIK). Topologically, residues 178–192 (KLHLNWLKYVVKILN) are lumenal. A helical transmembrane segment spans residues 193–213 (FNITLLNIPAGTFVYSYFLNS). The Cytoplasmic portion of the chain corresponds to 214 to 303 (LFRNLSHLAS…KSKRQISNMY (90 aa)). The helical transmembrane segment at 304-324 (LNSALIVSFVLSIVSTVYFYL) threads the bilayer. Residues 325–328 (SPND) lie on the Lumenal side of the membrane. Residues 329–349 (WLISNAVSMNMAIWSIAQLKL) form a helical membrane-spanning segment. Over 350 to 351 (KN) the chain is Cytoplasmic. The chain crosses the membrane as a helical span at residues 352-372 (LKSGALILIALFFYDICFVFG). The active site involves Asp366. Topologically, residues 373-401 (TDVMVTVATNLDIPVKLSLPVKFNTAQNN) are lumenal. A helical membrane pass occupies residues 402-422 (FNFSILGLGDIALPGMFIAMC). Residue Asp411 is part of the active site. At 423–450 (YKYDIWKWHLDHDDTEFHFLNWSYVGKY) the chain is on the cytoplasmic side. A helical membrane pass occupies residues 451 to 471 (FITAMVSYVASLVSAMVSLSI). Residues 472-475 (FNTA) are Lumenal-facing. Residues 476-496 (QPALLYIVPSLLISTILVACW) traverse the membrane as a helical segment. The PAL signature appears at 477 to 479 (PAL). Over 497–587 (NKDFKQFWNF…EEDLLDDESS (91 aa)) the chain is Cytoplasmic. Positions 561–587 (EFVQEEDLSDSSEEELSEEDLLDDESS) are disordered.

This sequence belongs to the peptidase A22B family.

It is found in the membrane. The protein resides in the endoplasmic reticulum membrane. In terms of biological role, may act as intramembrane protease. This is Probable intramembrane protease YKL100C from Saccharomyces cerevisiae (strain ATCC 204508 / S288c) (Baker's yeast).